A 50-amino-acid chain; its full sequence is Large ribosomal subunit protein bL33 (50 aa).

This sequence belongs to the bacterial ribosomal protein bL33 family.

The protein is Large ribosomal subunit protein bL33 of Mycoplasmopsis synoviae (strain 53) (Mycoplasma synoviae).